Consider the following 411-residue polypeptide: Putative competence-damage inducible protein (411 aa).

The protein belongs to the CinA family.

This is Putative competence-damage inducible protein from Clostridium acetobutylicum (strain ATCC 824 / DSM 792 / JCM 1419 / IAM 19013 / LMG 5710 / NBRC 13948 / NRRL B-527 / VKM B-1787 / 2291 / W).